The following is a 259-amino-acid chain: Acetylglutamate kinase (259 aa).

Substrate contacts are provided by residues 45–46 (GG), Arg-67, and Asn-159.

The protein belongs to the acetylglutamate kinase family. ArgB subfamily.

The protein resides in the cytoplasm. The enzyme catalyses N-acetyl-L-glutamate + ATP = N-acetyl-L-glutamyl 5-phosphate + ADP. It participates in amino-acid biosynthesis; L-arginine biosynthesis; N(2)-acetyl-L-ornithine from L-glutamate: step 2/4. Functionally, catalyzes the ATP-dependent phosphorylation of N-acetyl-L-glutamate. This is Acetylglutamate kinase from Aeromonas salmonicida (strain A449).